The chain runs to 155 residues: UPF0178 protein Gmet_1725 (155 aa).

It belongs to the UPF0178 family.

This chain is UPF0178 protein Gmet_1725, found in Geobacter metallireducens (strain ATCC 53774 / DSM 7210 / GS-15).